Consider the following 250-residue polypeptide: Hydroxyacylglutathione hydrolase (250 aa).

Zn(2+)-binding residues include His52, His54, Asp56, His57, His107, Asp128, and His166.

It belongs to the metallo-beta-lactamase superfamily. Glyoxalase II family. In terms of assembly, monomer. Zn(2+) serves as cofactor.

It catalyses the reaction an S-(2-hydroxyacyl)glutathione + H2O = a 2-hydroxy carboxylate + glutathione + H(+). It participates in secondary metabolite metabolism; methylglyoxal degradation; (R)-lactate from methylglyoxal: step 2/2. Thiolesterase that catalyzes the hydrolysis of S-D-lactoyl-glutathione to form glutathione and D-lactic acid. This is Hydroxyacylglutathione hydrolase from Neisseria gonorrhoeae (strain NCCP11945).